The chain runs to 278 residues: MFYHIKELQYQAKPAHPDPVYAKKLQEVLGGQFGEISVMMQYLFQGFNCRADAKYKDLLYDVGTEEIGHVEMLATMISRLLDNAPADVQEDAYKSNPAIAAVMSGMNPQHAIVSGLGAMASDSEGYPWNAKYIISSGNLLADFRANLNAEAQGRLQVTRLYAMTDDPGVRDMLSFLIARDTYHQNMWYAAIKELEERERDIVVPTTFPRELEKQEVSYDLFNFSRGDESSQGRWAHGEAFDGRGEFRYIPAPIAFASAPHLKPAPMWLHNTVPPMSKC.

Belongs to the manganese catalase family.

This is an uncharacterized protein from Bacillus subtilis (strain 168).